The following is a 105-amino-acid chain: uncharacterized protein (105 aa).

The segment covering 1 to 11 (MPHRNDRRKSA) has biased composition (basic residues). Residues 1-20 (MPHRNDRRKSASKAPNAIIH) form a disordered region.

This sequence belongs to the ALB1 family.

It is found in the nucleus. The protein localises to the nucleolus. This is an uncharacterized protein from Schizosaccharomyces pombe (strain 972 / ATCC 24843) (Fission yeast).